Consider the following 621-residue polypeptide: Replication factor A protein 1 (621 aa).

At S2 the chain carries N-acetylserine. S178 bears the Phosphoserine; by ATM or ATR mark. Positions 197-284 form a DNA-binding region, OB; that stretch reads WTIKARVSYK…PYELNLDRDT (88 aa). A C4-type zinc finger spans residues 486–508; it reads CSNENCNKKVLEQPDGTWRCEKC.

This sequence belongs to the replication factor A protein 1 family. As to quaternary structure, component of the heterotrimeric canonical replication protein A complex (RPA). Interacts with POB3. Post-translationally, the N-terminus is blocked.

The protein localises to the nucleus. Its function is as follows. As part of the replication protein A (RPA/RP-A), a single-stranded DNA-binding heterotrimeric complex, may play an essential role in DNA replication, recombination and repair. Binds and stabilizes single-stranded DNA intermediates, preventing complementary DNA reannealing and recruiting different proteins involved in DNA metabolism. Binds to single-stranded sequences participating in DNA replication in addition to those mediating transcriptional repression (URS1) and activation (CAR1). Stimulates the activity of a cognate strand exchange protein (SEP1). It cooperates with T-AG and DNA topoisomerase I to unwind template DNA containing the simian virus 40 origin of DNA replication. The polypeptide is Replication factor A protein 1 (RFA1) (Saccharomyces cerevisiae (strain ATCC 204508 / S288c) (Baker's yeast)).